We begin with the raw amino-acid sequence, 62 residues long: Photosystem II reaction center protein K (62 aa).

Positions 1–25 (MPNILSLTCICFNSVLYPTTSFFFA) are excised as a propeptide. Residues 33–53 (IFNPIVDVMPVIPLFFFLLAF) form a helical membrane-spanning segment.

It belongs to the PsbK family. PSII is composed of 1 copy each of membrane proteins PsbA, PsbB, PsbC, PsbD, PsbE, PsbF, PsbH, PsbI, PsbJ, PsbK, PsbL, PsbM, PsbT, PsbX, PsbY, PsbZ, Psb30/Ycf12, at least 3 peripheral proteins of the oxygen-evolving complex and a large number of cofactors. It forms dimeric complexes.

The protein resides in the plastid. It is found in the chloroplast thylakoid membrane. Functionally, one of the components of the core complex of photosystem II (PSII). PSII is a light-driven water:plastoquinone oxidoreductase that uses light energy to abstract electrons from H(2)O, generating O(2) and a proton gradient subsequently used for ATP formation. It consists of a core antenna complex that captures photons, and an electron transfer chain that converts photonic excitation into a charge separation. In Agrostis stolonifera (Creeping bentgrass), this protein is Photosystem II reaction center protein K.